A 282-amino-acid chain; its full sequence is Gap junction Cx32.7 protein (282 aa).

The Cytoplasmic portion of the chain corresponds to 2–13 (GEWDLLGRLLDK). Residues 14-36 (VQSHSTVIGKVWLTVLFVFRILV) form a helical membrane-spanning segment. Residues 37–76 (LRTGADRVWGDEQSDFVCNTQQPGCENVCYDLAFPISHVR) are Extracellular-facing. The helical transmembrane segment at 77–99 (FWFLQIIAVATPKLLYLGHVLHV) threads the bilayer. The Cytoplasmic portion of the chain corresponds to 100–148 (IHAEKKMKERMKKQAELDDQTNLFLRKAYKVPKYTKSSGKISIRGRLLR). The helical transmembrane segment at 149 to 171 (SYVYHLVAKIILEVLFIVGQYFL) threads the bilayer. The Extracellular portion of the chain corresponds to 172–203 (YGFTLDTRYVCTRFPCPHKVDCFLSRPTEKSV). A helical membrane pass occupies residues 204–226 (IIWFMLVAAFVSLFLSLVELFYL). Residues 227 to 282 (CVKAAKECMARRQDYTVTPVTPPLLARKSFKSHKEVFQNCVNEPASPENNMEEVHI) lie on the Cytoplasmic side of the membrane.

The protein belongs to the connexin family. Alpha-type (group II) subfamily. A connexon is composed of a hexamer of connexins. As to expression, expressed equally in incompetent and competent ovaries.

It is found in the cell membrane. The protein resides in the cell junction. Its subcellular location is the gap junction. In terms of biological role, one gap junction consists of a cluster of closely packed pairs of transmembrane channels, the connexons, through which materials of low MW diffuse from one cell to a neighboring cell. The polypeptide is Gap junction Cx32.7 protein (Micropogonias undulatus (Atlantic croaker)).